Consider the following 272-residue polypeptide: Ribosomal RNA small subunit methyltransferase A (272 aa).

The S-adenosyl-L-methionine site is built by His11, Leu13, Gly38, Glu59, Asp84, and Asn109.

This sequence belongs to the class I-like SAM-binding methyltransferase superfamily. rRNA adenine N(6)-methyltransferase family. RsmA subfamily.

It is found in the cytoplasm. It catalyses the reaction adenosine(1518)/adenosine(1519) in 16S rRNA + 4 S-adenosyl-L-methionine = N(6)-dimethyladenosine(1518)/N(6)-dimethyladenosine(1519) in 16S rRNA + 4 S-adenosyl-L-homocysteine + 4 H(+). Functionally, specifically dimethylates two adjacent adenosines (A1518 and A1519) in the loop of a conserved hairpin near the 3'-end of 16S rRNA in the 30S particle. May play a critical role in biogenesis of 30S subunits. This is Ribosomal RNA small subunit methyltransferase A from Rippkaea orientalis (strain PCC 8801 / RF-1) (Cyanothece sp. (strain PCC 8801)).